The primary structure comprises 156 residues: Ribosomal RNA large subunit methyltransferase H (156 aa).

Residues L74, G105, and 124 to 129 each bind S-adenosyl-L-methionine; that span reads LSKLTL.

Belongs to the RNA methyltransferase RlmH family. In terms of assembly, homodimer.

It is found in the cytoplasm. The catalysed reaction is pseudouridine(1915) in 23S rRNA + S-adenosyl-L-methionine = N(3)-methylpseudouridine(1915) in 23S rRNA + S-adenosyl-L-homocysteine + H(+). Functionally, specifically methylates the pseudouridine at position 1915 (m3Psi1915) in 23S rRNA. In Legionella pneumophila (strain Lens), this protein is Ribosomal RNA large subunit methyltransferase H.